The sequence spans 152 residues: Ribonuclease H (152 aa).

The RNase H type-1 domain occupies 1-142 (MNSKVVIYTD…ADKLAVQGRE (142 aa)). Asp-10, Glu-48, Asp-70, and Asp-134 together coordinate Mg(2+).

Belongs to the RNase H family. Monomer. The cofactor is Mg(2+).

It localises to the cytoplasm. The enzyme catalyses Endonucleolytic cleavage to 5'-phosphomonoester.. In terms of biological role, endonuclease that specifically degrades the RNA of RNA-DNA hybrids. This chain is Ribonuclease H, found in Rickettsia akari (strain Hartford).